Reading from the N-terminus, the 216-residue chain is uncharacterized protein (216 aa).

2 4Fe-4S ferredoxin-type domains span residues 160–189 (DDKP…IDEK) and 188–216 (EKPK…ALLP). Residues C169, C172, C175, C179, C197, C200, C203, and C207 each contribute to the [4Fe-4S] cluster site.

This sequence belongs to the FrhG family.

This is an uncharacterized protein from Methanocaldococcus jannaschii (strain ATCC 43067 / DSM 2661 / JAL-1 / JCM 10045 / NBRC 100440) (Methanococcus jannaschii).